The primary structure comprises 2223 residues: Sperm-associated antigen 17 (2223 aa).

Basic and acidic residues-rich tracts occupy residues arginine 144–alanine 172 and arginine 200–aspartate 212. Positions arginine 144–glutamate 214 are disordered. Residues asparagine 266–phenylalanine 295 are a coiled coil. Disordered regions lie at residues methionine 387 to valine 416, methionine 680 to leucine 710, proline 731 to methionine 762, glutamate 950 to isoleucine 1015, glycine 1179 to valine 1212, and glutamate 1345 to glutamate 1378. 3 stretches are compositionally biased toward basic and acidic residues: residues glutamate 743–glutamate 756, glutamate 950–lysine 999, and lysine 1182–glutamate 1205. Positions tryptophan 940 to alanine 966 form a coiled coil. The segment covering glutamate 1345–threonine 1354 has biased composition (polar residues). Positions arginine 1874–isoleucine 1907 form a coiled coil. Disordered regions lie at residues threonine 1938–leucine 1957 and histidine 1962–proline 2008. Over residues threonine 1988–lysine 1998 the composition is skewed to polar residues.

In terms of assembly, interacts (via the C-terminus) with SPAG6; the interaction probably occurs on polymerized microtubules. In terms of tissue distribution, highly expressed in testis. Expressed in organs that contain cilia-bearing cells including brain, oviduct, lung, and uterus.

It is found in the cytoplasm. Its subcellular location is the cytoskeleton. The protein resides in the flagellum axoneme. It localises to the cytoplasmic vesicle. The protein localises to the secretory vesicle. It is found in the acrosome. Its subcellular location is the golgi apparatus. Functionally, component of the central pair apparatus of ciliary axonemes. Plays a critical role in the function and structure of motile cilia. May play a role in endochondral bone formation, most likely because of a function in primary cilia of chondrocytes and osteoblasts. Essential for normal spermatogenesis and male fertility. Required for normal manchette structure, transport of proteins along the manchette microtubules and formation of the sperm head and flagellum. Essential for sperm flagellum development and proper assembly of the respiratory motile cilia central pair apparatus, but not the brain ependymal cilia. In Homo sapiens (Human), this protein is Sperm-associated antigen 17 (SPAG17).